The sequence spans 570 residues: MTLLWCVVSLYFYGILQSDASERCDDWGLDTMRQIQVFEDEPARIKCPLFEHFLKFNYSTAHSAGLTLIWYWTRQDRDLEEPINFRLPENRISKEKDVLWFRPTLLNDTGNYTCMLRNTTYCSKVAFPLEVVQKDSCFNSPMKLPVHKLYIEYGIQRITCPNVDGYFPSSVKPTITWYMGCYKIQNFNNVIPEGMNLSFLIAFISNNGNYTCVVTYPENGRTFHLTRTLTVKVVGSPKNAVPPVIHSPNDHVVYEKEPGEELLIPCTVYFSFLMDSRNEVWWTIDGKKPDDIPIDVTINESISHSRTEDETRTQILSIKKVTSEDLKRSYVCHARSAKGEVAKAATVKQKVPAPRYTVELACGFGATVLLVVILIVVYHVYWLEMVLFYRAHFGTDETILDGKEYDIYVSYARNAEEEEFVLLTLRGVLENEFGYKLCIFDRDSLPGGIVTDETLSFIQKSRRLLVVLSPNYVLQGTQALLELKAGLENMASQGNINVILVQYKAVKETKVKELKRAKTVLTVIKWKGEKSKYPQGRFWKQLQVAMPVKKSPRRSSSDEQGLSYSSLKNV.

The signal sequence occupies residues 1 to 20 (MTLLWCVVSLYFYGILQSDA). Ig-like C2-type domains follow at residues 21–128 (SERC…VAFP), 136–226 (SCFN…FHLT), and 242–350 (PPVI…VKQK). At 21–367 (SERCDDWGLD…VELACGFGAT (347 aa)) the chain is on the extracellular side. 5 disulfide bridges follow: cysteine 24–cysteine 122, cysteine 47–cysteine 114, cysteine 137–cysteine 181, cysteine 160–cysteine 212, and cysteine 266–cysteine 332. N-linked (GlcNAc...) asparagine glycosylation occurs at asparagine 57. Positions 69 to 85 (IWYWTRQDRDLEEPINF) are essential for interaction with PTPRD. Residues asparagine 107, asparagine 111, and asparagine 118 are each glycosylated (N-linked (GlcNAc...) asparagine). N-linked (GlcNAc...) asparagine glycosylation is found at asparagine 196, asparagine 209, and asparagine 299. The helical transmembrane segment at 368 to 388 (VLLVVILIVVYHVYWLEMVLF) threads the bilayer. Topologically, residues 389-570 (YRAHFGTDET…GLSYSSLKNV (182 aa)) are cytoplasmic. The 144-residue stretch at 403–546 (KEYDIYVSYA…RFWKQLQVAM (144 aa)) folds into the TIR domain. Glutamate 482 is an active-site residue. The segment at 549 to 570 (KKSPRRSSSDEQGLSYSSLKNV) is disordered. At serine 557 the chain carries Phosphoserine. Residues 558 to 570 (DEQGLSYSSLKNV) are compositionally biased toward polar residues.

It belongs to the interleukin-1 receptor family. As to quaternary structure, the interleukin-36 receptor complex is a heterodimer of IL1RL2 and IL1RAP; the association is inhibited by IL36RN. The interleukin-1 receptor complex is a heterodimer of IL1R1 and IL1RAP. Associates with IL1R2 to form a non-signaling interleukin-1 receptor complex. Interacts with IL-33-bound IL1RL1 to form the minimal interleukin-33 signaling complex with a 1:1:1 stoichiometry. Interacts with KIT (independently of stimulation with KITLG/SCF). A mast cell-specific KITLG/SCF-induced interleukin-33 signaling complex contains IL1RL1, IL1RAP, KIT and MYD88. Interacts (via the first immunoglobilin domain) with PTPRD (via the third immunoglobilin domain); induces pre- and postsynaptic differentiation of neurons.

The protein localises to the cell membrane. It is found in the secreted. It catalyses the reaction NAD(+) + H2O = ADP-D-ribose + nicotinamide + H(+). In terms of biological role, coreceptor for IL1RL2 in the IL-36 signaling system. Coreceptor with IL1R1 in the IL-1 signaling system. Associates with IL1R1 bound to IL1B to form the high affinity interleukin-1 receptor complex which mediates interleukin-1-dependent activation of NF-kappa-B and other pathways. Signaling involves the recruitment of adapter molecules such as TOLLIP, MYD88, and IRAK1 or IRAK2 via the respective TIR domains of the receptor/coreceptor subunits. Recruits TOLLIP to the signaling complex. Does not bind to interleukin-1 alone; binding of IL1RN to IL1R1, prevents its association with IL1R1 to form a signaling complex. The cellular response is modulated through a non-signaling association with the membrane IL1R2 decoy receptor. Coreceptor for IL1RL1 in the IL-33 signaling system. Can bidirectionally induce pre- and postsynaptic differentiation of neurons by trans-synaptically binding to PTPRD. May play a role in IL1B-mediated costimulation of IFNG production from T-helper 1 (Th1) cells. Functionally, associates with secreted ligand-bound IL1R2 and increases the affinity of secreted IL1R2 for IL1B; this complex formation may be the dominant mechanism for neutralization of IL1B by secreted/soluble receptors. Enhances the ability of secreted IL1R1 to inhibit IL-33 signaling. The chain is Interleukin-1 receptor accessory protein (IL1RAP) from Macaca mulatta (Rhesus macaque).